The following is a 434-amino-acid chain: N-acylneuraminate cytidylyltransferase (434 aa).

At M1 the chain carries N-acetylmethionine. The tract at residues 1-42 (MDSVEKGAATSVSNPRGRPSRGRPPKLQRNSRGGQGRGVEKP) is disordered. A BC1 motif motif is present at residues 15-31 (PRGRPSRGRPPKLQRNS). Residues R37 and R52 each carry the omega-N-methylarginine modification. R52, N62, R111, S120, S122, and Q143 together coordinate substrate. The short motif at 200–206 (KRPRRQD) is the BC2 motif element. The active site involves R201. The BC3 motif signature appears at 269–276 (KEKLKEIK).

Belongs to the CMP-NeuNAc synthase family. Homotetramer; the active enzyme is formed by a dimer of dimers.

Its subcellular location is the nucleus. The catalysed reaction is an N-acylneuraminate + CTP = a CMP-N-acyl-beta-neuraminate + diphosphate. Its pathway is amino-sugar metabolism; N-acetylneuraminate metabolism. Functionally, catalyzes the activation of N-acetylneuraminic acid (NeuNAc) to cytidine 5'-monophosphate N-acetylneuraminic acid (CMP-NeuNAc), a substrate required for the addition of sialic acid. Has some activity toward NeuNAc, N-glycolylneuraminic acid (Neu5Gc) or 2-keto-3-deoxy-D-glycero-D-galacto-nononic acid (KDN). In Bos taurus (Bovine), this protein is N-acylneuraminate cytidylyltransferase (CMAS).